The following is a 290-amino-acid chain: tRNA(Ile)-lysidine synthase, chloroplastic (290 aa).

33-38 lines the ATP pocket; the sequence is SGGQDS.

The protein belongs to the tRNA(Ile)-lysidine synthase family.

Its subcellular location is the plastid. It localises to the chloroplast. The enzyme catalyses cytidine(34) in tRNA(Ile2) + L-lysine + ATP = lysidine(34) in tRNA(Ile2) + AMP + diphosphate + H(+). In terms of biological role, ligates lysine onto the cytidine present at position 34 of the AUA codon-specific tRNA(Ile) that contains the anticodon CAU, in an ATP-dependent manner. Cytidine is converted to lysidine, thus changing the amino acid specificity of the tRNA from methionine to isoleucine. The polypeptide is tRNA(Ile)-lysidine synthase, chloroplastic (Cyanidioschyzon merolae (strain NIES-3377 / 10D) (Unicellular red alga)).